The sequence spans 1205 residues: Nitric oxide synthase 3 (1205 aa).

The segment at 1-73 is disordered; the sequence is MGNLKSVGQE…PPEGPKFPRV (73 aa). G2 is lipidated: N-myristoyl glycine. Residues C15 and C26 are each lipidated (S-palmitoyl cysteine). Residues 15–27 show a composition bias toward gly residues; it reads CGLGLGLGLGLCG. Residues 33–47 show a composition bias toward pro residues; the sequence is SPAPEPSRAPAPATP. The Zn(2+) site is built by C96 and C101. An interaction with NOSIP region spans residues 100 to 488; it reads CCLGSLVLPR…PDPWKGSATK (389 aa). Residue S104 coordinates (6R)-L-erythro-5,6,7,8-tetrahydrobiopterin. At S116 the chain carries Phosphoserine; by CDK5. A heme b-binding site is contributed by C186. The L-arginine site is built by Q249, W358, Y359, E363, and N368. (6R)-L-erythro-5,6,7,8-tetrahydrobiopterin-binding residues include A448, W449, and F462. Y477 is a binding site for heme b. Residues 492–512 are calmodulin-binding; it reads ITRKKTFKEVANAVKISASLM. A Phosphothreonine; by AMPK and PKA modification is found at T497. The region spanning 522-705 is the Flavodoxin-like domain; that stretch reads ATILYASETG…AFRGWAKAAF (184 aa). FMN contacts are provided by S528, E529, T530, R532, S574, and T575. Phosphoserine occurs at positions 617, 635, and 640. FMN-binding residues include S656, C663, E689, and Q693. The 247-residue stretch at 758-1004 folds into the FAD-binding FR-type domain; that stretch reads RKMFQATVLS…IRGAPSFRLP (247 aa). Residue R778 coordinates NADP(+). H800 contributes to the FAD binding site. The segment at 820 to 847 is disordered; sequence EDPPPPTESVAVEQLEKGSPGGPPPSWV. S838 is modified (phosphoserine). 9 residues coordinate FAD: R940, Y942, S943, T958, A960, Y964, V977, C978, and S979. 7 residues coordinate NADP(+): T1018, R1051, S1080, R1081, K1087, Y1089, and Q1091. At T1177 the chain carries Phosphothreonine. Residue S1179 is modified to Phosphoserine; by AMPK, PDPK1 and PKA. S1181 bears the Phosphoserine mark.

It belongs to the NOS family. In terms of assembly, homodimer. Interacts with NOSIP and NOSTRIN. Interacts with HSP90AB1. Forms a complex with ASL, ASS1 and SLC7A1; the complex regulates cell-autonomous L-arginine synthesis and citrulline recycling while channeling extracellular L-arginine to nitric oxide synthesis pathway. Heme b serves as cofactor. It depends on FAD as a cofactor. Requires FMN as cofactor. The cofactor is (6R)-L-erythro-5,6,7,8-tetrahydrobiopterin. In terms of processing, phosphorylation by AMPK at Ser-1179 in the presence of Ca(2+)-calmodulin (CaM) activates activity. In absence of Ca(2+)-calmodulin, AMPK also phosphorylates Thr-497, resulting in inhibition of activity. Phosphorylation of Ser-116 by CDK5 reduces activity.

The protein localises to the cell membrane. The protein resides in the membrane. It is found in the caveola. It localises to the cytoplasm. Its subcellular location is the cytoskeleton. The protein localises to the golgi apparatus. The catalysed reaction is 2 L-arginine + 3 NADPH + 4 O2 + H(+) = 2 L-citrulline + 2 nitric oxide + 3 NADP(+) + 4 H2O. With respect to regulation, stimulated by calcium/calmodulin. Inhibited by NOSIP and NOSTRIN. Produces nitric oxide (NO) which is implicated in vascular smooth muscle relaxation through a cGMP-mediated signal transduction pathway. NO mediates vascular endothelial growth factor (VEGF)-induced angiogenesis in coronary vessels and promotes blood clotting through the activation of platelets. In Bos taurus (Bovine), this protein is Nitric oxide synthase 3 (NOS3).